The primary structure comprises 288 residues: Oxaloacetate decarboxylase (288 aa).

Ser-47 contacts substrate. Asp-85 provides a ligand contact to Mg(2+). 2 residues coordinate substrate: Arg-156 and His-232.

This sequence belongs to the isocitrate lyase/PEP mutase superfamily. Oxaloacetate decarboxylase family. In terms of assembly, homotetramer; dimer of dimers. Requires Mg(2+) as cofactor.

The catalysed reaction is oxaloacetate + H(+) = pyruvate + CO2. Functionally, catalyzes the decarboxylation of oxaloacetate into pyruvate. Seems to play a role in maintaining cellular concentrations of bicarbonate and pyruvate. This Bradyrhizobium diazoefficiens (strain JCM 10833 / BCRC 13528 / IAM 13628 / NBRC 14792 / USDA 110) protein is Oxaloacetate decarboxylase.